A 407-amino-acid chain; its full sequence is Aminomethyltransferase, mitochondrial (407 aa).

Residues 1–29 constitute a mitochondrion transit peptide; the sequence is MRGGLWQLGQSITRRLGQSDKKTIVRRCY. Substrate is bound by residues E234, R265, and Y403.

This sequence belongs to the GcvT family. As to quaternary structure, the glycine cleavage system is composed of four proteins: P, T, L and H.

It localises to the mitochondrion. It catalyses the reaction N(6)-[(R)-S(8)-aminomethyldihydrolipoyl]-L-lysyl-[protein] + (6S)-5,6,7,8-tetrahydrofolate = N(6)-[(R)-dihydrolipoyl]-L-lysyl-[protein] + (6R)-5,10-methylene-5,6,7,8-tetrahydrofolate + NH4(+). Functionally, the glycine cleavage system catalyzes the degradation of glycine. This is Aminomethyltransferase, mitochondrial (GDCST) from Flaveria anomala (Yellowtops).